Consider the following 639-residue polypeptide: MNQVFFSKIRSLVSADRHRFKSKEMDLDLDLSYITDNILAMGFPGTGLEASWRNSIDDVCELLKQKHHGKYMIWNLSERVYDYSKLNNQILEFPFLDHHPPPLSLLFEIVNSLSNWLKADAENVAVVHCKGGKGRTGTIICCYLYYSCQFEIMDDAKNHFAEKRSKMKKGVTQPSQQRYINYFKEIVSGSHMVEEFVLTFRSIELGPLTKDQANSLSFEIFEHAKEPILNFASSSNSIQIVPINNDNSESNNNNNNNNNNNNNNNNQQQQLYKIIILIQKKVQNDVLIRVYRGDTGKGKGKMKKQIFHLIFNIAFVNLDQCLFGMNEFDHFKSSKKYDPNLQMECRFQNNCTGAPDHSFKIWNIMALQYQRTKSSLNNSITDIKSINEINSTNNNNILASSAPTPLTTTTTTTTTTTTTSLPSSEHSTPQILISSSDANLDLKNCNINCDSSSGGGSNSSRNSNSNSRGGSSNSSSNRSSTSSRSSITTDSIKPSCSSDSICNNSSICNNSCNNNNNNNNNNNNNNNNNNNNNNNNNNNKNSNNNNNESSSNSNDDSDSEASIRKRKNTLWSSGSSIKLKPSPNLSRLSLFNGHRQSFTKKINPNNNEENVDQKTLPILKKETNDPSESDIKNVEIIQD.

The Phosphatase tensin-type domain maps to 20–190; sequence FKSKEMDLDL…NYFKEIVSGS (171 aa). Residue Cys129 is the Phosphocysteine intermediate of the active site. One can recognise a C2 tensin-type domain in the interval 195–350; the sequence is EFVLTFRSIE…LQMECRFQNN (156 aa). Disordered regions lie at residues 243 to 265, 395 to 429, 451 to 498, 519 to 567, and 598 to 628; these read INNDNSESNNNNNNNNNNNNNNN, NNILASSAPTPLTTTTTTTTTTTTTSLPSSEHSTP, SSSG…SCSS, NNNN…RKRK, and FTKKINPNNNEENVDQKTLPILKKETNDPSE. Low complexity-rich tracts occupy residues 244-265, 395-424, 458-486, and 519-554; these read NNDNSESNNNNNNNNNNNNNNN, NNILASSAPTPLTTTTTTTTTTTTTSLPSS, NSSRNSNSNSRGGSSNSSSNRSSTSSRSS, and NNNNNNNNNNNNNNNNNNNNNKNSNNNNNESSSNSN. Over residues 598–608 the composition is skewed to polar residues; that stretch reads FTKKINPNNNE. A compositionally biased stretch (basic and acidic residues) spans 619–628; that stretch reads LKKETNDPSE.

Requires Mg(2+) as cofactor.

It catalyses the reaction a 1,2-diacyl-sn-glycero-3-phospho-(1D-myo-inositol-3,4,5-trisphosphate) + H2O = a 1,2-diacyl-sn-glycero-3-phospho-(1D-myo-inositol-4,5-bisphosphate) + phosphate. Its function is as follows. Protein phosphatase that negatively regulates PI3K-dependent pathways. Regulates cAMP signal transduction to control territory size. During development, a lawn of Dictyostelium cells breaks up into territories where cells aggregate in dendritic streams to form groups of 20'000 cells. In Dictyostelium discoideum (Social amoeba), this protein is Phosphatidylinositol 3,4,5-trisphosphate 3-phosphatase cnrN (cnrN).